Reading from the N-terminus, the 295-residue chain is Succinate dehydrogenase assembly factor 2, mitochondrial (295 aa).

Disordered stretches follow at residues 35–90, 208–227, and 269–295; these read AKDN…PELL, PEEGTPAEDTPTETWQRTGA, and TGFHAAKNKKTGGSGLGRMPNIQVFDS. The span at 45-75 shows a compositional bias: polar residues; it reads STPSTAPEYRQNQTSKPPNQFMPNSTSTMTN.

It belongs to the SDHAF2 family. As to quaternary structure, interacts with the flavoprotein subunit within the SDH catalytic dimer.

The protein resides in the mitochondrion matrix. In terms of biological role, plays an essential role in the assembly of succinate dehydrogenase (SDH), an enzyme complex (also referred to as respiratory complex II) that is a component of both the tricarboxylic acid (TCA) cycle and the mitochondrial electron transport chain, and which couples the oxidation of succinate to fumarate with the reduction of ubiquinone (coenzyme Q) to ubiquinol. Required for flavinylation (covalent attachment of FAD) of the flavoprotein subunit of the SDH catalytic dimer. The protein is Succinate dehydrogenase assembly factor 2, mitochondrial of Aspergillus terreus (strain NIH 2624 / FGSC A1156).